A 490-amino-acid chain; its full sequence is Aspartyl/glutamyl-tRNA(Asn/Gln) amidotransferase subunit B (490 aa).

This sequence belongs to the GatB/GatE family. GatB subfamily. In terms of assembly, heterotrimer of A, B and C subunits.

The catalysed reaction is L-glutamyl-tRNA(Gln) + L-glutamine + ATP + H2O = L-glutaminyl-tRNA(Gln) + L-glutamate + ADP + phosphate + H(+). It catalyses the reaction L-aspartyl-tRNA(Asn) + L-glutamine + ATP + H2O = L-asparaginyl-tRNA(Asn) + L-glutamate + ADP + phosphate + 2 H(+). Functionally, allows the formation of correctly charged Asn-tRNA(Asn) or Gln-tRNA(Gln) through the transamidation of misacylated Asp-tRNA(Asn) or Glu-tRNA(Gln) in organisms which lack either or both of asparaginyl-tRNA or glutaminyl-tRNA synthetases. The reaction takes place in the presence of glutamine and ATP through an activated phospho-Asp-tRNA(Asn) or phospho-Glu-tRNA(Gln). The sequence is that of Aspartyl/glutamyl-tRNA(Asn/Gln) amidotransferase subunit B from Burkholderia ambifaria (strain MC40-6).